The chain runs to 223 residues: 7-cyano-7-deazaguanine synthase (223 aa).

11–21 (ISGGMDSALAA) provides a ligand contact to ATP. Residues Cys189, Cys197, Cys200, and Cys203 each coordinate Zn(2+).

It belongs to the QueC family. Requires Zn(2+) as cofactor.

The enzyme catalyses 7-carboxy-7-deazaguanine + NH4(+) + ATP = 7-cyano-7-deazaguanine + ADP + phosphate + H2O + H(+). It functions in the pathway purine metabolism; 7-cyano-7-deazaguanine biosynthesis. Functionally, catalyzes the ATP-dependent conversion of 7-carboxy-7-deazaguanine (CDG) to 7-cyano-7-deazaguanine (preQ(0)). This chain is 7-cyano-7-deazaguanine synthase, found in Campylobacter fetus subsp. fetus (strain 82-40).